Reading from the N-terminus, the 362-residue chain is Heme A synthase (362 aa).

5 helical membrane-spanning segments follow: residues 12–32 (AVRI…LVGG), 102–122 (VIGA…DLGG), 128–148 (LWII…MVAS), 159–179 (VRLA…VWTL), and 198–218 (AAVL…VAGL). His-262 is a binding site for heme. 3 consecutive transmembrane segments (helical) span residues 264 to 281 (MLAY…IDAW), 289 to 309 (GALA…VTLL), and 312 to 332 (VPIG…TLAV). His-320 contributes to the heme binding site.

Belongs to the COX15/CtaA family. Type 2 subfamily. Interacts with CtaB. Requires heme b as cofactor.

It is found in the cell membrane. The catalysed reaction is Fe(II)-heme o + 2 A + H2O = Fe(II)-heme a + 2 AH2. It functions in the pathway porphyrin-containing compound metabolism; heme A biosynthesis; heme A from heme O: step 1/1. Catalyzes the conversion of heme O to heme A by two successive hydroxylations of the methyl group at C8. The first hydroxylation forms heme I, the second hydroxylation results in an unstable dihydroxymethyl group, which spontaneously dehydrates, resulting in the formyl group of heme A. The sequence is that of Heme A synthase from Rhodopseudomonas palustris (strain BisB18).